The chain runs to 192 residues: Large ribosomal subunit protein uL6 (192 aa).

It belongs to the universal ribosomal protein uL6 family. In terms of assembly, part of the 50S ribosomal subunit.

This protein binds to the 23S rRNA, and is important in its secondary structure. It is located near the subunit interface in the base of the L7/L12 stalk, and near the tRNA binding site of the peptidyltransferase center. The chain is Large ribosomal subunit protein uL6 from Nanoarchaeum equitans (strain Kin4-M).